We begin with the raw amino-acid sequence, 86 residues long: Electron transfer flavoprotein regulatory factor 1 (86 aa).

It belongs to the complex I LYR family.

The protein localises to the mitochondrion. Functionally, acts as a regulator of the electron transfer flavoprotein by promoting the removal of flavin from the ETF holoenzyme (composed of ETFA and ETFB). This chain is Electron transfer flavoprotein regulatory factor 1, found in Taeniopygia guttata (Zebra finch).